The following is a 439-amino-acid chain: Mitochondrial distribution and morphology protein 12 (439 aa).

An SMP-LTD domain is found at 1–439 (MSIDVNWRSA…VYPSFWTFLI (439 aa)). Residues 70–85 (YEEDDDDHTSDASEEL) are compositionally biased toward acidic residues. Disordered regions lie at residues 70 to 102 (YEED…ELNE), 184 to 274 (SGWS…PPRM), and 353 to 386 (GSEQ…RHGG). A compositionally biased stretch (basic and acidic residues) spans 197 to 212 (GRSERHAGMKHQRAEP). Residues 215-230 (DTSNSTSRPSTANTLP) show a composition bias toward polar residues. The segment covering 231–240 (SHPSSSSKNS) has biased composition (low complexity). Positions 247 to 261 (RNDHPSLHAGEHIED) are enriched in basic and acidic residues.

This sequence belongs to the MDM12 family. Component of the ER-mitochondria encounter structure (ERMES) or MDM complex, composed of mmm1, mdm10, mdm12 and mdm34. A mmm1 homodimer associates with one molecule of mdm12 on each side in a pairwise head-to-tail manner, and the SMP-LTD domains of mmm1 and mdm12 generate a continuous hydrophobic tunnel for phospholipid trafficking.

Its subcellular location is the mitochondrion outer membrane. The protein resides in the endoplasmic reticulum membrane. Functionally, component of the ERMES/MDM complex, which serves as a molecular tether to connect the endoplasmic reticulum (ER) and mitochondria. Components of this complex are involved in the control of mitochondrial shape and protein biogenesis, and function in nonvesicular lipid trafficking between the ER and mitochondria. Mdm12 is required for the interaction of the ER-resident membrane protein mmm1 and the outer mitochondrial membrane-resident beta-barrel protein mdm10. The mdm12-mmm1 subcomplex functions in the major beta-barrel assembly pathway that is responsible for biogenesis of all mitochondrial outer membrane beta-barrel proteins, and acts in a late step after the SAM complex. The mdm10-mdm12-mmm1 subcomplex further acts in the TOM40-specific pathway after the action of the mdm12-mmm1 complex. Essential for establishing and maintaining the structure of mitochondria and maintenance of mtDNA nucleoids. The polypeptide is Mitochondrial distribution and morphology protein 12 (Neosartorya fischeri (strain ATCC 1020 / DSM 3700 / CBS 544.65 / FGSC A1164 / JCM 1740 / NRRL 181 / WB 181) (Aspergillus fischerianus)).